Here is a 362-residue protein sequence, read N- to C-terminus: Apelin receptor A (362 aa).

Topologically, residues 1–34 (MEPTSEYTETYDYYDTGYNDSGCDYSEWEPSYSL) are extracellular. Asn-19 carries an N-linked (GlcNAc...) asparagine glycan. 2 disulfides stabilise this stretch: Cys-23/Cys-286 and Cys-105/Cys-184. The chain crosses the membrane as a helical span at residues 35 to 55 (IPVLYMLIFILGLSGNGVVIF). The Cytoplasmic portion of the chain corresponds to 56-73 (TVWRAKSKRRAADVYIGN). Residues 74-94 (LALADLTFVITLPLWAVYTAL) traverse the membrane as a helical segment. Residues 95–106 (GYHWPFGVALCK) are Extracellular-facing. Residues 107–127 (ISSYVVLVNMYASVFCLTCLS) form a helical membrane-spanning segment. Residues 128 to 149 (FDRYLAIVHSLSSGRLRSRATM) lie on the Cytoplasmic side of the membrane. Residues 150 to 170 (LASLGAIWFLSCLLAVPTLLF) form a helical membrane-spanning segment. Residues 171-211 (RTTVDDTGSNRTTCAMDFSLVTLNQDHESLWIAGLSLSSSA) lie on the Extracellular side of the membrane. An N-linked (GlcNAc...) asparagine glycan is attached at Asn-180. A helical membrane pass occupies residues 212 to 232 (LGFLLPFLAMTVCYCFIGCTV). At 233–248 (TRHFSHLRKEDQKKRR) the chain is on the cytoplasmic side. The helical transmembrane segment at 249–269 (LLKIITTLVVVFAFCWTPFHV) threads the bilayer. The Extracellular portion of the chain corresponds to 270–284 (LKSMDALSYLDLAPN). A helical membrane pass occupies residues 285–305 (SCGFLHFLLLAHPYATCLAYV). Over 306 to 362 (NSCLNPFLYAFFDLRFRSQCLCLLNLKKAMHGHMSSMSSTLSAQTQKSEVQSLATKV) the chain is Cytoplasmic.

It belongs to the G-protein coupled receptor 1 family. In terms of tissue distribution, first expressed before epiboly in dorsal precursors. During epiboly, expressed in the enveloping layer, yolk syncytial layer and migrating mesendoderm. During segmentation stages, expressed in epithelial structures such as adaxial cells, border cells of the newly formed somites, developing lens, otic vesicles and venous vasculature.

It is found in the cell membrane. Functionally, g protein-coupled receptor for peptide hormones apelin (apln) and apelin receptor early endogenous ligand (apela), that plays a role in the regulation of normal cardiovascular function and fluid homeostasis. When acting as apelin receptor, activates both G(i) protein pathway that inhibits adenylate cyclase activity, and the beta-arrestin pathway that promotes internalization of the receptor. Also functions as mechanoreceptor that is activated by pathological stimuli in a G-protein-independent fashion to induce beta-arrestin signaling, hence eliciting cardiac hypertrophy. However, the presence of apelin ligand blunts cardiac hypertrophic induction from APLNR/APJ on response to pathological stimuli. Plays a key role in early development such as gastrulation, blood vessels formation and heart morphogenesis by acting as a receptor for apela hormone, promoting endoderm and mesendoderm cell migration and regulating the migration of cells fated to become myocardial progenitors, respectively. Positively regulates angioblast migration toward the embryonic midline, i.e. the position of the future vessel formation, during vasculogenesis. May promote sinus venosus (SV)-derived endothelial cells migration into the developing heart to promote coronary blood vessel development. Required for cardiovascular development, particularly for intersomitic vein angiogenesis by acting as a receptor for apln hormone. Also plays a role in various processes in adults such as regulation of blood vessel formation, blood pressure, heart contractility, and heart failure. Acts redundantly with agtrl1b in heart development. The chain is Apelin receptor A (aplnra) from Danio rerio (Zebrafish).